Here is a 219-residue protein sequence, read N- to C-terminus: ATP-dependent dethiobiotin synthetase BioD (219 aa).

12-17 contributes to the ATP binding site; it reads EVGKTY. Thr16 provides a ligand contact to Mg(2+). Residue Lys37 is part of the active site. Ser41 provides a ligand contact to substrate. ATP-binding positions include Asp52, 114–117, and 174–175; these read EGAG and NC. Residues Asp52 and Glu114 each coordinate Mg(2+).

The protein belongs to the dethiobiotin synthetase family. As to quaternary structure, homodimer. Mg(2+) is required as a cofactor.

The protein resides in the cytoplasm. It catalyses the reaction (7R,8S)-7,8-diammoniononanoate + CO2 + ATP = (4R,5S)-dethiobiotin + ADP + phosphate + 3 H(+). It participates in cofactor biosynthesis; biotin biosynthesis; biotin from 7,8-diaminononanoate: step 1/2. In terms of biological role, catalyzes a mechanistically unusual reaction, the ATP-dependent insertion of CO2 between the N7 and N8 nitrogen atoms of 7,8-diaminopelargonic acid (DAPA, also called 7,8-diammoniononanoate) to form a ureido ring. The sequence is that of ATP-dependent dethiobiotin synthetase BioD from Francisella tularensis subsp. holarctica (strain FTNF002-00 / FTA).